Consider the following 452-residue polypeptide: Rhodopsin (452 aa).

Over 1–33 the chain is Extracellular; the sequence is MGRDIPDNETWWYNPYMDIHPHWKQFDQVPAAV. Asparagine 8 carries an N-linked (GlcNAc...) asparagine glycan. The chain crosses the membrane as a helical span at residues 34–58; it reads YYSLGIFIAICGIIGCVGNGVVIYL. Residues 59-70 are Cytoplasmic-facing; that stretch reads FTKTKSLQTPAN. A helical membrane pass occupies residues 71-97; the sequence is MFIINLAFSDFTFSLVNGFPLMTISCF. Topologically, residues 98–109 are extracellular; sequence MKYWVFGNAACK. Cysteines 108 and 186 form a disulfide. A helical transmembrane segment spans residues 110 to 131; that stretch reads VYGLIGGIFGLMSIMTMTMISI. Positions 132–134 match the 'Ionic lock' involved in activated form stabilization motif; the sequence is DRY. Residues 132-151 lie on the Cytoplasmic side of the membrane; that stretch reads DRYNVIGRPMSASKKMSHRK. The helical transmembrane segment at 152–172 threads the bilayer; that stretch reads AFIMIIFVWIWSTIWAIGPIF. The Extracellular portion of the chain corresponds to 173–199; that stretch reads GWGAYTLEGVLCNCSFDYITRDTTTRS. The chain crosses the membrane as a helical span at residues 200 to 224; it reads NILCMYIFAFMCPIVVIFFCYFNIV. Topologically, residues 225–261 are cytoplasmic; that stretch reads MSVSNHEKEMAAMAKRLNAKELRKAQAGANAEMKLAK. Residues 262–283 form a helical membrane-spanning segment; sequence ISIVIVTQFLLSWSPYAVVALL. Over 284 to 293 the chain is Extracellular; that stretch reads AQFGPIEWVT. A helical membrane pass occupies residues 294-315; sequence PYAAQLPVMFAKASAIHNPMIY. Lysine 305 carries the N6-(retinylidene)lysine modification. Topologically, residues 316 to 452 are cytoplasmic; it reads SVSHPKFRER…QGVDNQAYQA (137 aa). S-palmitoyl cysteine attachment occurs at residues cysteine 336 and cysteine 337. 2 disordered regions span residues 346 to 365 and 376 to 452; these read DDKDAEAEIPAGEQSGGETA and MMQK…AYQA. Low complexity predominate over residues 376–388; that stretch reads MMQKMQAQQQQQP. Positions 389 to 440 are enriched in pro residues; the sequence is AYPPQGYPPQGYPPPPPQGYPPQGYPPQGYPPQGYPPPPQGPPPQGPPPQAA.

It belongs to the G-protein coupled receptor 1 family. Opsin subfamily. Contains one covalently linked retinal chromophore. Upon light absorption, the covalently bound 11-cis-retinal is converted to all-trans-retinal. After hydrolysis of the Schiff base and release of the covalently bound all-trans-retinal, active rhodopsin is regenerated by binding of a fresh molecule of 11-cis-retinal.

The protein resides in the cell projection. The protein localises to the rhabdomere membrane. Its function is as follows. Photoreceptor required for image-forming vision at low light intensity. Light-induced isomerization of 11-cis to all-trans retinal triggers a conformational change that activates signaling via G-proteins. Signaling mediates the activation of phospholipase C. Subsequent receptor phosphorylation mediates displacement of the bound G-protein alpha subunit by arrestin and terminates signaling. The polypeptide is Rhodopsin (RHO) (Loligo forbesii (Veined squid)).